The sequence spans 236 residues: 1-(5-phosphoribosyl)-5-[(5-phosphoribosylamino)methylideneamino] imidazole-4-carboxamide isomerase (236 aa).

The Proton acceptor role is filled by aspartate 8. Aspartate 129 functions as the Proton donor in the catalytic mechanism.

The protein belongs to the HisA/HisF family.

The protein localises to the cytoplasm. The catalysed reaction is 1-(5-phospho-beta-D-ribosyl)-5-[(5-phospho-beta-D-ribosylamino)methylideneamino]imidazole-4-carboxamide = 5-[(5-phospho-1-deoxy-D-ribulos-1-ylimino)methylamino]-1-(5-phospho-beta-D-ribosyl)imidazole-4-carboxamide. The protein operates within amino-acid biosynthesis; L-histidine biosynthesis; L-histidine from 5-phospho-alpha-D-ribose 1-diphosphate: step 4/9. This Methanoregula boonei (strain DSM 21154 / JCM 14090 / 6A8) protein is 1-(5-phosphoribosyl)-5-[(5-phosphoribosylamino)methylideneamino] imidazole-4-carboxamide isomerase.